The chain runs to 79 residues: Ferredoxin oxidoreductase 1 subunit ForD (79 aa).

4Fe-4S ferredoxin-type domains follow at residues 3 to 35 (YVAQVIKDECSKYNCKQCTLFCPEPNTLMYTDE) and 37 to 65 (HHAYVNTLRCKGCALCVYVCSELLKRDSI). Residues Cys12, Cys17, Cys20, Cys24, Cys46, Cys49, Cys52, and Cys56 each contribute to the [4Fe-4S] cluster site.

As to quaternary structure, heterotetramer of one alpha, one beta, one delta and one gamma chain. [4Fe-4S] cluster serves as cofactor.

This is Ferredoxin oxidoreductase 1 subunit ForD (forD1) from Aquifex aeolicus (strain VF5).